The primary structure comprises 885 residues: Protein transport protein SEC24-1 (885 aa).

Zn(2+)-binding residues include Cys-164, Cys-167, Cys-186, and Cys-189. Positions 164 to 189 (CRRCRSYLNPFVAFIEQGRRWQCNIC) are zinc finger-like. The disordered stretch occupies residues 296–332 (DDYEESDDDDDEDDDDEEEDNEEEEEEEEDEEDDDDS).

Belongs to the SEC23/SEC24 family. SEC24 subfamily. As to quaternary structure, the COPII coat is composed of at least 5 proteins: the SEC23/24 complex, the SEC13/31 complex, and the protein SAR1. Golgi apparatus membrane; Peripheral membrane protein; Cytoplasmic side.

The protein resides in the cytoplasm. The protein localises to the cytoplasmic vesicle. Its subcellular location is the COPII-coated vesicle membrane. It is found in the endoplasmic reticulum membrane. It localises to the golgi apparatus membrane. Functionally, component of the coat protein complex II (COPII) which promotes the formation of transport vesicles from the endoplasmic reticulum (ER). The coat has two main functions, the physical deformation of the endoplasmic reticulum membrane into vesicles and the selection of cargo molecules. This is Protein transport protein SEC24-1 (SEC241) from Saccharomyces uvarum (strain ATCC 76518 / CBS 7001 / CLIB 283 / NBRC 10550 / MCYC 623 / NCYC 2669 / NRRL Y-11845) (Yeast).